We begin with the raw amino-acid sequence, 468 residues long: Ribosomal lysine N-methyltransferase 4 (468 aa).

The region spanning 22–302 (EKIGLNDYRH…KGEQLWNTYG (281 aa)) is the SET domain. Positions 188 to 225 (ISNENEKSAAETSIKEDKNGDAAKKNEGSANQDDEKLH) are disordered. An S-adenosyl-L-methionine-binding site is contributed by tyrosine 301.

It belongs to the class V-like SAM-binding methyltransferase superfamily. Histone-lysine methyltransferase family. SETD6 subfamily.

The protein resides in the nucleus. Functionally, S-adenosyl-L-methionine-dependent protein-lysine N-methyltransferase that monomethylates 60S ribosomal protein L42 (rpl42) at 'Lys-55'. The protein is Ribosomal lysine N-methyltransferase 4 of Schizosaccharomyces pombe (strain 972 / ATCC 24843) (Fission yeast).